The chain runs to 425 residues: Protein CLP1 homolog (425 aa).

ATP contacts are provided by residues Glu-18, Lys-59, and 121-126 (DVGKST).

This sequence belongs to the Clp1 family. Clp1 subfamily.

The protein resides in the nucleus. In terms of biological role, required for endonucleolytic cleavage during polyadenylation-dependent pre-mRNA 3'-end formation. This Drosophila persimilis (Fruit fly) protein is Protein CLP1 homolog (cbc).